Consider the following 699-residue polypeptide: D-(-)-3-hydroxybutyrate oligomer hydrolase (699 aa).

The first 33 residues, Met-1–Ala-33, serve as a signal peptide directing secretion. Ser-311 functions as the Charge relay system in the catalytic mechanism.

The protein belongs to the D-(-)-3-hydroxybutyrate oligomer hydrolase family.

It localises to the secreted. The enzyme catalyses (3R)-hydroxybutanoate dimer + H2O = 2 (R)-3-hydroxybutanoate + H(+). Its pathway is lipid metabolism; butanoate metabolism. In terms of biological role, participates in the degradation of poly-3-hydroxybutyrate (PHB). It works downstream of poly(3-hydroxybutyrate) depolymerase, hydrolyzing D(-)-3-hydroxybutyrate oligomers of various length (3HB-oligomers) into 3HB-monomers. The chain is D-(-)-3-hydroxybutyrate oligomer hydrolase from Burkholderia pseudomallei (strain 1106a).